A 174-amino-acid polypeptide reads, in one-letter code: Co-chaperone protein HscB (174 aa).

A J domain is found at 2-74 (DYFTLFGLPA…LKRAEYMLSL (73 aa)).

It belongs to the HscB family. Interacts with HscA and stimulates its ATPase activity. Interacts with IscU.

Co-chaperone involved in the maturation of iron-sulfur cluster-containing proteins. Seems to help targeting proteins to be folded toward HscA. The protein is Co-chaperone protein HscB of Yersinia pseudotuberculosis serotype O:1b (strain IP 31758).